A 60-amino-acid polypeptide reads, in one-letter code: Sperm protamine P1 (60 aa).

Residues 1-60 form a disordered region; that stretch reads MARYRHSRSRSRSRYRRRRRRRSRYRSQRRRYRGRRRRRSRRGRRRGYSRRRYSRRRRRY.

Belongs to the protamine P1 family. As to expression, testis.

It localises to the nucleus. Its subcellular location is the chromosome. Its function is as follows. Protamines substitute for histones in the chromatin of sperm during the haploid phase of spermatogenesis. They compact sperm DNA into a highly condensed, stable and inactive complex. This chain is Sperm protamine P1 (PRM1), found in Osphranter rufus (Red kangaroo).